We begin with the raw amino-acid sequence, 218 residues long: Transaldolase (218 aa).

K83 (schiff-base intermediate with substrate) is an active-site residue.

This sequence belongs to the transaldolase family. Type 3B subfamily.

The protein resides in the cytoplasm. It catalyses the reaction D-sedoheptulose 7-phosphate + D-glyceraldehyde 3-phosphate = D-erythrose 4-phosphate + beta-D-fructose 6-phosphate. It participates in carbohydrate degradation; pentose phosphate pathway; D-glyceraldehyde 3-phosphate and beta-D-fructose 6-phosphate from D-ribose 5-phosphate and D-xylulose 5-phosphate (non-oxidative stage): step 2/3. In terms of biological role, transaldolase is important for the balance of metabolites in the pentose-phosphate pathway. Does not show fructose-6-P aldolase activity. The sequence is that of Transaldolase (tal) from Thermotoga maritima (strain ATCC 43589 / DSM 3109 / JCM 10099 / NBRC 100826 / MSB8).